The chain runs to 31 residues: U14-ctenitoxin-Co1a (31 aa).

Post-translationally, disulfide bonds are present. Expressed by the venom gland.

The protein localises to the secreted. Functionally, omega-agatoxins are antagonists of voltage-gated calcium channels (Cav). The protein is U14-ctenitoxin-Co1a of Ctenus ornatus (Brazilian spider).